A 144-amino-acid polypeptide reads, in one-letter code: MKSKTKTRRKAREYAVQALYSWQISKNDIYDVINHFKKNKTINEIDQIYFYELIIGITKNLKYLDELMRPYLSRTIQELGQIEKAILRISFFELDKRYDIPFKVTINESIELAKLFGAKDSHKFINGVLDKASLKLRKNNSNKN.

Belongs to the NusB family.

In terms of biological role, involved in transcription antitermination. Required for transcription of ribosomal RNA (rRNA) genes. Binds specifically to the boxA antiterminator sequence of the ribosomal RNA (rrn) operons. In Buchnera aphidicola subsp. Baizongia pistaciae (strain Bp), this protein is Transcription antitermination protein NusB.